The chain runs to 462 residues: tRNA(Ile)-lysidine synthase (462 aa).

27–32 (SGGPDS) is a binding site for ATP.

The protein belongs to the tRNA(Ile)-lysidine synthase family.

It localises to the cytoplasm. The catalysed reaction is cytidine(34) in tRNA(Ile2) + L-lysine + ATP = lysidine(34) in tRNA(Ile2) + AMP + diphosphate + H(+). In terms of biological role, ligates lysine onto the cytidine present at position 34 of the AUA codon-specific tRNA(Ile) that contains the anticodon CAU, in an ATP-dependent manner. Cytidine is converted to lysidine, thus changing the amino acid specificity of the tRNA from methionine to isoleucine. This chain is tRNA(Ile)-lysidine synthase, found in Clostridioides difficile (strain 630) (Peptoclostridium difficile).